We begin with the raw amino-acid sequence, 281 residues long: uncharacterized protein (281 aa).

The next 4 membrane-spanning stretches (helical) occupy residues 8–28 (ALPVVAIVALVASGVITFIWS), 97–117 (LAVALHGLGLSVLLFDYRGYG), 147–167 (PARIAYFGESLGAAVAVGLAV), and 210–230 (IASVHAPVLVIAGGSDDIVPA).

The protein to S.pombe bem46 and yeast YNL320w.

The protein localises to the cell membrane. This is an uncharacterized protein from Mycobacterium tuberculosis (strain CDC 1551 / Oshkosh).